Consider the following 317-residue polypeptide: Transaldolase (317 aa).

K132 acts as the Schiff-base intermediate with substrate in catalysis.

This sequence belongs to the transaldolase family. Type 1 subfamily. As to quaternary structure, homodimer.

It localises to the cytoplasm. The enzyme catalyses D-sedoheptulose 7-phosphate + D-glyceraldehyde 3-phosphate = D-erythrose 4-phosphate + beta-D-fructose 6-phosphate. It participates in carbohydrate degradation; pentose phosphate pathway; D-glyceraldehyde 3-phosphate and beta-D-fructose 6-phosphate from D-ribose 5-phosphate and D-xylulose 5-phosphate (non-oxidative stage): step 2/3. In terms of biological role, transaldolase is important for the balance of metabolites in the pentose-phosphate pathway. The polypeptide is Transaldolase (Yersinia enterocolitica serotype O:8 / biotype 1B (strain NCTC 13174 / 8081)).